We begin with the raw amino-acid sequence, 342 residues long: Guanine nucleotide-binding protein alpha-9 subunit (342 aa).

G2 carries N-myristoyl glycine lipidation. A lipid anchor (S-palmitoyl cysteine) is attached at C3. The 315-residue stretch at 28-342 (REIKLLLLGS…IIQSILKLHY (315 aa)) folds into the G-alpha domain. Positions 31–44 (KLLLLGSGDSGKST) are G1 motif. GTP is bound by residues 36-43 (GSGDSGKS), 167-173 (LRCRQRT), 192-196 (DVGGQ), 261-264 (NKND), and A316. Positions 43 and 173 each coordinate Mg(2+). The G2 motif stretch occupies residues 165 to 173 (DVLRCRQRT). The tract at residues 188–197 (FRLIDVGGQK) is G3 motif. A G4 motif region spans residues 257 to 264 (VLFLNKND). Positions 314–319 (TTATDT) are G5 motif.

This sequence belongs to the G-alpha family. As to quaternary structure, g proteins are composed of 3 units; alpha, beta and gamma. The alpha chain contains the guanine nucleotide binding site.

Guanine nucleotide-binding proteins (G proteins) are involved as modulators or transducers in various transmembrane signaling systems. G alpha-9 antagonizes broad chemotactic response. It functions rapidly following receptor stimulation to negatively regulate PI3K/PTEN, adenylyl cyclase, and guanylyl cyclase pathways. This Dictyostelium discoideum (Social amoeba) protein is Guanine nucleotide-binding protein alpha-9 subunit (gpaI).